The following is a 175-amino-acid chain: MRNNVTELVNSIIGVQTPGSLPDTLSGAHSLQRRISYFDVNWISWNWDNVNVDLNKEVKKSRPLLGEEDDQCMFGWFANNPGWKYYWSVTDNPDPGYKENYSDIGDENAVHGELYFNTYGGLMASVMTTKMVLNAKRQLVVIDTIVVKAICDYVMKYWKKKVNLTTISLYLMLKL.

This sequence to yeast YER187w.

This is an uncharacterized protein from Saccharomyces cerevisiae (strain ATCC 204508 / S288c) (Baker's yeast).